Consider the following 750-residue polypeptide: Photosystem I P700 chlorophyll a apoprotein A1 (750 aa).

The next 8 membrane-spanning stretches (helical) occupy residues 70–93 (VFSA…FHGA), 156–179 (LYCT…FHYH), 195–219 (LNHH…HVSL), 291–309 (IAHH…GHMY), 346–369 (WHAQ…HHMY), 385–411 (LSLF…IFMV), 433–455 (AIIS…LYIH), and 531–549 (FLVH…LILL). Residues cysteine 573 and cysteine 582 each contribute to the [4Fe-4S] cluster site. Helical transmembrane passes span 589 to 610 (HVFL…HFSW) and 664 to 686 (LSAY…MFLF). Histidine 675 contacts chlorophyll a'. Residues methionine 683 and tyrosine 691 each coordinate chlorophyll a. Tryptophan 692 contributes to the phylloquinone binding site. The helical transmembrane segment at 724-744 (AVGVTHYLLGGIATTWAFFLA) threads the bilayer.

It belongs to the PsaA/PsaB family. The PsaA/B heterodimer binds the P700 chlorophyll special pair and subsequent electron acceptors. PSI consists of a core antenna complex that captures photons, and an electron transfer chain that converts photonic excitation into a charge separation. The eukaryotic PSI reaction center is composed of at least 11 subunits. Requires P700 is a chlorophyll a/chlorophyll a' dimer, A0 is one or more chlorophyll a, A1 is one or both phylloquinones and FX is a shared 4Fe-4S iron-sulfur center. as cofactor.

Its subcellular location is the plastid. The protein resides in the chloroplast thylakoid membrane. It catalyses the reaction reduced [plastocyanin] + hnu + oxidized [2Fe-2S]-[ferredoxin] = oxidized [plastocyanin] + reduced [2Fe-2S]-[ferredoxin]. PsaA and PsaB bind P700, the primary electron donor of photosystem I (PSI), as well as the electron acceptors A0, A1 and FX. PSI is a plastocyanin-ferredoxin oxidoreductase, converting photonic excitation into a charge separation, which transfers an electron from the donor P700 chlorophyll pair to the spectroscopically characterized acceptors A0, A1, FX, FA and FB in turn. Oxidized P700 is reduced on the lumenal side of the thylakoid membrane by plastocyanin. The chain is Photosystem I P700 chlorophyll a apoprotein A1 from Panax ginseng (Korean ginseng).